We begin with the raw amino-acid sequence, 429 residues long: MLRLASLKFGRLFRYAKVLFAASLLVVMLLNTHSLLSSFQRNELTDRRFLSLNKCPACFGTSWCRKFMNGQLSFEGWGRLRLLDFFNVKNVHFAQYGEPREGSRRVVLKRLGSNHELSELDQRICKKATGRPRCDLVQAMYKTDFARLNGDVRLLTPDVVEGWSDLVHCPSQRLLDRLVRRYAETKDSGSFLLRNLKDTERMQLLLTLAFNPEPLVLQSFPSDEGWPFAKYLGACGRMVAVNYVGEELWSYFNAPWEKRVDLAWQLMEIAEQLTNNDFDFALYLLDVSFDNFAVGPRDGKVIIVDAENVLVADKKLIKQNKPENWDVWYESKFDDCDKEACLSFSKEILCSRATVDHNYYAICQNLLSRHATWRGTSGGLLHDPPAEIAKDGRLEALLDECANPKKRYGRFKSAKELREYLAQLSNNAR.

Positions Met-1–Ser-34 are cleaved as a signal peptide.

It belongs to the DIPK family.

It is found in the cytoplasmic vesicle. The protein resides in the COPI-coated vesicle. Its subcellular location is the golgi apparatus. It localises to the secreted. May play a role in cardiomyocyte proliferation through paracrine signaling and activation of the PPI3K-AKT-CDK7 signaling cascade. This Xenopus tropicalis (Western clawed frog) protein is Divergent protein kinase domain 2A (dipk2a).